A 343-amino-acid chain; its full sequence is Probable 3',5'-cyclic-nucleotide phosphodiesterase (343 aa).

Positions 1–36 (MKYLSIKSASDKIKSGLLKTGVILSFSLFSSLSTAA) are cleaved as a signal peptide.

It belongs to the cyclic nucleotide phosphodiesterase class-II family.

It is found in the periplasm. The enzyme catalyses a nucleoside 3',5'-cyclic phosphate + H2O = a nucleoside 5'-phosphate + H(+). This chain is Probable 3',5'-cyclic-nucleotide phosphodiesterase (cpdP), found in Yersinia pestis.